The sequence spans 201 residues: Holliday junction branch migration complex subunit RuvA (201 aa).

Residues 1-64 form a domain I region; the sequence is MIGRLRGTLA…EDAHLLYGFA (64 aa). Residues 65 to 143 are domain II; it reads EKRERELFRE…AWENMPTIAP (79 aa). The interval 144–152 is flexible linker; sequence LVMEPRASA. Residues 153-201 form a domain III region; the sequence is TVSSAEADAVSALIALGFKPQEASRAVAAVPGEDLSSEEMIRQALKGMV.

Belongs to the RuvA family. In terms of assembly, homotetramer. Forms an RuvA(8)-RuvB(12)-Holliday junction (HJ) complex. HJ DNA is sandwiched between 2 RuvA tetramers; dsDNA enters through RuvA and exits via RuvB. An RuvB hexamer assembles on each DNA strand where it exits the tetramer. Each RuvB hexamer is contacted by two RuvA subunits (via domain III) on 2 adjacent RuvB subunits; this complex drives branch migration. In the full resolvosome a probable DNA-RuvA(4)-RuvB(12)-RuvC(2) complex forms which resolves the HJ.

The protein resides in the cytoplasm. Its function is as follows. The RuvA-RuvB-RuvC complex processes Holliday junction (HJ) DNA during genetic recombination and DNA repair, while the RuvA-RuvB complex plays an important role in the rescue of blocked DNA replication forks via replication fork reversal (RFR). RuvA specifically binds to HJ cruciform DNA, conferring on it an open structure. The RuvB hexamer acts as an ATP-dependent pump, pulling dsDNA into and through the RuvAB complex. HJ branch migration allows RuvC to scan DNA until it finds its consensus sequence, where it cleaves and resolves the cruciform DNA. This chain is Holliday junction branch migration complex subunit RuvA, found in Pseudomonas aeruginosa (strain LESB58).